The primary structure comprises 193 residues: Probable thymidylate kinase (193 aa).

7-14 (GIDGAGKT) serves as a coordination point for ATP.

The protein belongs to the thymidylate kinase family.

It carries out the reaction dTMP + ATP = dTDP + ADP. This chain is Probable thymidylate kinase (tmk), found in Thermoplasma acidophilum (strain ATCC 25905 / DSM 1728 / JCM 9062 / NBRC 15155 / AMRC-C165).